The chain runs to 727 residues: Phosphoribosylformylglycinamidine synthase subunit PurL (727 aa).

H47 is a catalytic residue. Y50 and K82 together coordinate ATP. E84 lines the Mg(2+) pocket. Substrate-binding positions include 85–88 and R107; that span reads SHNH. The active-site Proton acceptor is H86. D108 is a binding site for Mg(2+). A substrate-binding site is contributed by Q229. D257 serves as a coordination point for Mg(2+). 301-303 serves as a coordination point for substrate; sequence ESQ. Positions 486 and 523 each coordinate ATP. Residue N524 coordinates Mg(2+). Residue S526 coordinates substrate.

This sequence belongs to the FGAMS family. In terms of assembly, monomer. Part of the FGAM synthase complex composed of 1 PurL, 1 PurQ and 2 PurS subunits.

It is found in the cytoplasm. It carries out the reaction N(2)-formyl-N(1)-(5-phospho-beta-D-ribosyl)glycinamide + L-glutamine + ATP + H2O = 2-formamido-N(1)-(5-O-phospho-beta-D-ribosyl)acetamidine + L-glutamate + ADP + phosphate + H(+). It participates in purine metabolism; IMP biosynthesis via de novo pathway; 5-amino-1-(5-phospho-D-ribosyl)imidazole from N(2)-formyl-N(1)-(5-phospho-D-ribosyl)glycinamide: step 1/2. Its function is as follows. Part of the phosphoribosylformylglycinamidine synthase complex involved in the purines biosynthetic pathway. Catalyzes the ATP-dependent conversion of formylglycinamide ribonucleotide (FGAR) and glutamine to yield formylglycinamidine ribonucleotide (FGAM) and glutamate. The FGAM synthase complex is composed of three subunits. PurQ produces an ammonia molecule by converting glutamine to glutamate. PurL transfers the ammonia molecule to FGAR to form FGAM in an ATP-dependent manner. PurS interacts with PurQ and PurL and is thought to assist in the transfer of the ammonia molecule from PurQ to PurL. The chain is Phosphoribosylformylglycinamidine synthase subunit PurL from Petrotoga mobilis (strain DSM 10674 / SJ95).